We begin with the raw amino-acid sequence, 323 residues long: Beta-ketoacyl-[acyl-carrier-protein] synthase III (323 aa).

Catalysis depends on residues cysteine 113 and histidine 250. Positions 251 to 255 are ACP-binding; that stretch reads QANKR. Residue asparagine 280 is part of the active site.

Belongs to the thiolase-like superfamily. FabH family. As to quaternary structure, homodimer.

The protein resides in the cytoplasm. The catalysed reaction is malonyl-[ACP] + acetyl-CoA + H(+) = 3-oxobutanoyl-[ACP] + CO2 + CoA. It functions in the pathway lipid metabolism; fatty acid biosynthesis. Functionally, catalyzes the condensation reaction of fatty acid synthesis by the addition to an acyl acceptor of two carbons from malonyl-ACP. Catalyzes the first condensation reaction which initiates fatty acid synthesis and may therefore play a role in governing the total rate of fatty acid production. Possesses both acetoacetyl-ACP synthase and acetyl transacylase activities. Its substrate specificity determines the biosynthesis of branched-chain and/or straight-chain of fatty acids. This is Beta-ketoacyl-[acyl-carrier-protein] synthase III from Brucella anthropi (strain ATCC 49188 / DSM 6882 / CCUG 24695 / JCM 21032 / LMG 3331 / NBRC 15819 / NCTC 12168 / Alc 37) (Ochrobactrum anthropi).